A 359-amino-acid polypeptide reads, in one-letter code: F-box protein At1g10895 (359 aa).

The 47-residue stretch at 2–48 (TTMSDLDEIMVAEILCRTPMTCLKTVRSVCKKWNALSKKWFFFGKAK) folds into the F-box domain.

The chain is F-box protein At1g10895 from Arabidopsis thaliana (Mouse-ear cress).